The primary structure comprises 77 residues: Lantipeptide prochlorosin 4.3 (77 aa).

A propeptide spanning residues 1–64 (MSEEQLKAFI…DDELEGVAGG (64 aa)) is cleaved from the precursor. At Thr-65 the chain carries 2,3-didehydrobutyrine. Residues 67 to 70 (SGGC) constitute a cross-link (lanthionine (Ser-Cys)). Residues 72-76 (TSMFC) constitute a cross-link (beta-methyllanthionine (Thr-Cys)).

Post-translationally, cross-links are proved in vitro, when coepressed in E.coli with the ProcM lanthionine synthetase. The lanthionine residue has both a DL configuration (with 2S,6R stereochemistry) and a LL configuration (with 2R,6R stereochemistry). DL and LL diastomers have a 4:1 ratio. It is unknown whether nonenzymatic cyclization occur, but authors favor a model in which ProcM does generate all thioether cross-links. The beta-methyllanthionine residue has a DL configuration (with 2S,3S,6R stereochemistry). In terms of processing, maturation of prochlorosin involves the enzymatic conversion of Thr, and Ser into dehydrated AA and the formation of thioether bonds with cysteines. This is followed by membrane translocation and cleavage of the modified precursor.

The protein localises to the secreted. Lanthionine-containing peptide (lantipeptide) with unknown function. Does not show antibiotic activity against Lactococcus lactis 117 and Bacillus subtilis 6633 bacteria. Organisms that produce this peptide live in oligotrophic environments at very dilute concentrations, suggesting this peptide is not secreted to influence other bacteria. This chain is Lantipeptide prochlorosin 4.3, found in Prochlorococcus marinus (strain MIT 9313).